We begin with the raw amino-acid sequence, 255 residues long: Imidazole glycerol phosphate synthase subunit HisF (255 aa).

Catalysis depends on residues D11 and D130.

It belongs to the HisA/HisF family. As to quaternary structure, heterodimer of HisH and HisF.

Its subcellular location is the cytoplasm. The enzyme catalyses 5-[(5-phospho-1-deoxy-D-ribulos-1-ylimino)methylamino]-1-(5-phospho-beta-D-ribosyl)imidazole-4-carboxamide + L-glutamine = D-erythro-1-(imidazol-4-yl)glycerol 3-phosphate + 5-amino-1-(5-phospho-beta-D-ribosyl)imidazole-4-carboxamide + L-glutamate + H(+). The protein operates within amino-acid biosynthesis; L-histidine biosynthesis; L-histidine from 5-phospho-alpha-D-ribose 1-diphosphate: step 5/9. In terms of biological role, IGPS catalyzes the conversion of PRFAR and glutamine to IGP, AICAR and glutamate. The HisF subunit catalyzes the cyclization activity that produces IGP and AICAR from PRFAR using the ammonia provided by the HisH subunit. In Akkermansia muciniphila (strain ATCC BAA-835 / DSM 22959 / JCM 33894 / BCRC 81048 / CCUG 64013 / CIP 107961 / Muc), this protein is Imidazole glycerol phosphate synthase subunit HisF.